The sequence spans 207 residues: Serotonin N-acetyltransferase (207 aa).

Thr-31 is subject to Phosphothreonine; by PKA. In terms of domain architecture, N-acetyltransferase spans 35–196 (NEFRCLTPKD…TFTEMHCSLR (162 aa)). Leu-124 contacts substrate. Acetyl-CoA contacts are provided by residues 124–126 (LAV) and 132–137 (QQGKGS). Residue Met-159 participates in substrate binding. 168 to 170 (YQR) is a binding site for acetyl-CoA. Ser-205 bears the Phosphoserine mark.

The protein belongs to the acetyltransferase family. AANAT subfamily. In terms of assembly, monomer. Interacts with several 14-3-3 proteins, including YWHAB, YWHAE, YWHAG and YWHAZ, preferentially when phosphorylated at Thr-31. Phosphorylation on Ser-205 also allows binding to YWHAZ, but with lower affinity. The interaction with YWHAZ considerably increases affinity for arylalkylamines and acetyl-CoA and protects the enzyme from dephosphorylation and proteasomal degradation. It may also prevent thiol-dependent inactivation. In terms of processing, cAMP-dependent phosphorylation on both N-terminal Thr-31 and C-terminal Ser-205 regulates AANAT activity by promoting interaction with 14-3-3 proteins. In terms of tissue distribution, high levels in pineal gland and retina.

Its subcellular location is the cytoplasm. It catalyses the reaction a 2-arylethylamine + acetyl-CoA = an N-acetyl-2-arylethylamine + CoA + H(+). The protein operates within aromatic compound metabolism; melatonin biosynthesis; melatonin from serotonin: step 1/2. Functionally, controls the night/day rhythm of melatonin production in the pineal gland. Catalyzes the N-acetylation of serotonin into N-acetylserotonin, the penultimate step in the synthesis of melatonin. This chain is Serotonin N-acetyltransferase (AANAT), found in Bos taurus (Bovine).